A 172-amino-acid chain; its full sequence is Thioredoxin Y1, chloroplastic (172 aa).

A chloroplast-targeting transit peptide spans 1-62 (MASISLSSST…SSTTRCTPRR (62 aa)). A Thioredoxin domain is found at 63–169 (IEAKKQTFDS…LIQRIEDSLK (107 aa)). Residues Cys-93 and Cys-96 each act as nucleophile in the active site. The cysteines at positions 93 and 96 are disulfide-linked.

This sequence belongs to the thioredoxin family. Plant Y-type subfamily. Expressed in roots and seeds.

Its subcellular location is the plastid. It is found in the chloroplast stroma. Thiol-disulfide oxidoreductase that poorly activates chloroplastic malate dehydrogenase (NADP-MDH) and fructose-1,6-bisphosphatase. Provides reducing equivalents for peroxiredoxin Q. The sequence is that of Thioredoxin Y1, chloroplastic from Arabidopsis thaliana (Mouse-ear cress).